The sequence spans 488 residues: Cobyric acid synthase (488 aa).

In terms of domain architecture, GATase cobBQ-type spans 255 to 442; the sequence is ALKIAVPVLP…LHGLFGSDAY (188 aa). The Nucleophile role is filled by cysteine 337. Histidine 434 is a catalytic residue.

Belongs to the CobB/CobQ family. CobQ subfamily.

Its pathway is cofactor biosynthesis; adenosylcobalamin biosynthesis. Its function is as follows. Catalyzes amidations at positions B, D, E, and G on adenosylcobyrinic A,C-diamide. NH(2) groups are provided by glutamine, and one molecule of ATP is hydrogenolyzed for each amidation. This Rhizobium johnstonii (strain DSM 114642 / LMG 32736 / 3841) (Rhizobium leguminosarum bv. viciae) protein is Cobyric acid synthase.